A 257-amino-acid chain; its full sequence is MLNFIRSDKDKGKGNDNDINFSNIPKHIAIIMDGNGRWAKKRNLPRTMGHKAGGEALKRIVRECSDIGVKYLTVYGFSTENWIRPKEEVNAIMRLIVEFLKREFNELNKNNVIINPIGNILGLPEACITALNDAKNKTKNNTGLMLNLALNYGGRDEILNAVKNIFASYEENKISKDEIFNLSDEEFSSYLYTGCIPDPDIIIRPSGEKRLSNFLLWQCAYSEFWYSNINWPDFSIEDLHTAIKDYQNRDRRFGGVK.

Asp-33 is an active-site residue. Asp-33 is a Mg(2+) binding site. Substrate is bound by residues 34–37 (GNGR), Trp-38, Arg-46, His-50, and 78–80 (STE). The Proton acceptor role is filled by Asn-81. Residues Trp-82, Arg-84, Arg-204, and 210–212 (RLS) each bind substrate. Position 223 (Glu-223) interacts with Mg(2+).

This sequence belongs to the UPP synthase family. As to quaternary structure, homodimer. Mg(2+) serves as cofactor.

Functionally, catalyzes the condensation of isopentenyl diphosphate (IPP) with allylic pyrophosphates generating different type of terpenoids. This Clostridium acetobutylicum (strain ATCC 824 / DSM 792 / JCM 1419 / IAM 19013 / LMG 5710 / NBRC 13948 / NRRL B-527 / VKM B-1787 / 2291 / W) protein is Isoprenyl transferase.